The primary structure comprises 276 residues: Large ribosomal subunit protein uL2 (276 aa).

Disordered stretches follow at residues 14-58 (RNAS…GGGH) and 219-276 (PITR…KNRK). Polar residues predominate over residues 16–27 (ASVSDFSELTRS). Residues 255 to 276 (RRPKKASNKMIVRRRPSGKNRK) are compositionally biased toward basic residues.

The protein belongs to the universal ribosomal protein uL2 family. Part of the 50S ribosomal subunit. Forms a bridge to the 30S subunit in the 70S ribosome.

One of the primary rRNA binding proteins. Required for association of the 30S and 50S subunits to form the 70S ribosome, for tRNA binding and peptide bond formation. It has been suggested to have peptidyltransferase activity; this is somewhat controversial. Makes several contacts with the 16S rRNA in the 70S ribosome. The polypeptide is Large ribosomal subunit protein uL2 (Bifidobacterium longum (strain DJO10A)).